The primary structure comprises 149 residues: UPF0179 protein MA_3685 (149 aa).

Belongs to the UPF0179 family.

This chain is UPF0179 protein MA_3685, found in Methanosarcina acetivorans (strain ATCC 35395 / DSM 2834 / JCM 12185 / C2A).